Here is a 219-residue protein sequence, read N- to C-terminus: Glutathione S-transferase (219 aa).

Residues 2 to 89 (SQPILGYWDI…YLGRKYKLNG (88 aa)) form the GST N-terminal domain. Glutathione is bound by residues 8 to 9 (YW), 44 to 47 (RSEW), lysine 51, 60 to 61 (NL), and 73 to 74 (QT). The region spanning 91 to 207 (NDHEEIRISM…YIKKQQPKTF (117 aa)) is the GST C-terminal domain. Tyrosine 117 is a substrate binding site.

Belongs to the GST superfamily. Mu family. In terms of assembly, homodimer.

It is found in the cytoplasm. It carries out the reaction RX + glutathione = an S-substituted glutathione + a halide anion + H(+). The protein is Glutathione S-transferase of Dermatophagoides pteronyssinus (European house dust mite).